The following is a 212-amino-acid chain: Maleylpyruvate isomerase (212 aa).

A GST N-terminal domain is found at 1-80 (MKLYNFWRSG…WLEEQYPTPA (80 aa)). Glutathione-binding positions include 9 to 11 (SGT), histidine 38, valine 52, 64 to 65 (QS), 102 to 104 (DIH), 108 to 110 (NRR), and arginine 176. The GST C-terminal domain occupies 85–212 (DADGRQRVRA…AAPAAQPDSA (128 aa)).

This sequence belongs to the GST superfamily. Zeta family. In terms of assembly, homodimer. Glutathione is required as a cofactor.

It carries out the reaction 3-maleylpyruvate = 3-fumarylpyruvate. It participates in aromatic compound metabolism; naphthalene degradation. Its function is as follows. Catalyzes the GSH-dependent isomerization of maleylpyruvate to fumarylpyruvate which is subsequently processed by NagK to form pyruvate and fumarate. This Ralstonia sp protein is Maleylpyruvate isomerase.